The chain runs to 198 residues: Holliday junction resolvase RecU (198 aa).

Positions 1 to 21 are disordered; sequence MVNYPHKLSSQKRQPSLSQPK. The span at 11 to 21 shows a compositional bias: polar residues; sequence QKRQPSLSQPK. Residues threonine 81, aspartate 83, glutamate 96, and glutamine 115 each coordinate Mg(2+).

Belongs to the RecU family. Mg(2+) is required as a cofactor.

It is found in the cytoplasm. It catalyses the reaction Endonucleolytic cleavage at a junction such as a reciprocal single-stranded crossover between two homologous DNA duplexes (Holliday junction).. Its function is as follows. Endonuclease that resolves Holliday junction intermediates in genetic recombination. Cleaves mobile four-strand junctions by introducing symmetrical nicks in paired strands. Promotes annealing of linear ssDNA with homologous dsDNA. Required for DNA repair, homologous recombination and chromosome segregation. This chain is Holliday junction resolvase RecU, found in Streptococcus pneumoniae (strain ATCC 700669 / Spain 23F-1).